A 65-amino-acid polypeptide reads, in one-letter code: uncharacterized protein (65 aa).

This is an uncharacterized protein from Escherichia coli (Bacteriophage T4).